A 985-amino-acid polypeptide reads, in one-letter code: MRHVRAMERIEAKKAENRWSLRQPKKARGPGVPKSHWDYMLEEMEWMRTDFAEERRWKVVEAREFAYQVVEWHLASPEEKKALMVGGRGWGECRNVPIPGHAGKRKEVTVEVEAEDEDVEMLVGQEGELDGEGEANKVLESIDEMRVNEKERENRPEDPRETVNINQDIGEEVDAEGEADADGEPENGEADAEGEADADGGPVGDDVVGLSEIDAAQDDTRETSERPSYRRDTVLPNGLVIHKRFANAYEIAIARGPVLDTPLANATVDLDTLTKSSSAATPATVPAEPSVSPDEPASFDQLFPDLAMYSGPAPPENDKKYRRDEGGTYSHRMAHTSRIMDIRPILVSTLQPAKNLIDGEWDLHDGPYYEEVKGAADIPPNVVAAFNTPFGGKASRPLEHMRVPEVPKPAAHHLRAQLLWSPEEDKCLLKLVAMYPFNWDLIADSFNTEMILIPVEKRNPYECWERWYYTFGEGKNKPRQDAPPSAPPPAPASATQPGTATATPVPQSAVTTPGVPPSANLPSASGRPQQTGGNSVSSLPTPTGEALPDGAPPPPGMSKRDRMAAKPKYEGTKRSVRHQAIYDAVKRMNRRREAARAKSHKDNAQRKVINVHESHSMSFPHVAASTPWELVEAKYQRDVQIAQQRQQRAMQEQQRQLAIRQQQAMMSAQQQAQMRPPNMPNVPNMPNAQPIRMGPNGQPMPTMAPSQQQLLNAVAAATAANRQNANGAVQGNPNVRPMPVVQGQSPQVQQQMLLQAQQMAAQQARVLQAQAQAQAQQGRAPSMGGNLQPPQLGVSSPFAQSRTPDLPAEGAGPSGINPTPSPAMQAAAIGAQSSPQIATMGRAPSNNVPPHLRVPNAGTSSPQISSPMALPQGIPNGAGMPVQGAQTQGIQIPAAMMNNATVQQLLATLAASGQQMTPEQLRGLMLRSAHMQAQAQSQVGNPGTPQMGVQNIQGVQHFARSPSLQNAQSQPRSSPKPGPANGQGT.

Residues 24-100 form the HSA domain; that stretch reads PKKARGPGVP…GECRNVPIPG (77 aa). Disordered stretches follow at residues 124–230 and 275–295; these read GQEG…PSYR and KSSS…SPDE. Positions 143 to 161 are enriched in basic and acidic residues; the sequence is DEMRVNEKERENRPEDPRE. The span at 169 to 198 shows a compositional bias: acidic residues; sequence IGEEVDAEGEADADGEPENGEADAEGEADA. A compositionally biased stretch (basic and acidic residues) spans 218–230; that stretch reads DDTRETSERPSYR. A compositionally biased stretch (low complexity) spans 275 to 290; that stretch reads KSSSAATPATVPAEPS. In terms of domain architecture, Myb-like spans 412-471; the sequence is HHLRAQLLWSPEEDKCLLKLVAMYPFNWDLIADSFNTEMILIPVEKRNPYECWERWYYTF. Residues 475-575 are disordered; it reads KNKPRQDAPP…KPKYEGTKRS (101 aa). Over residues 492-507 the composition is skewed to low complexity; the sequence is ASATQPGTATATPVPQ. Residues 520 to 541 show a composition bias toward polar residues; it reads NLPSASGRPQQTGGNSVSSLPT. Residues 558–573 show a composition bias toward basic and acidic residues; sequence SKRDRMAAKPKYEGTK. Positions 591-664 form a coiled coil; the sequence is RREAARAKSH…RQLAIRQQQA (74 aa). Over residues 773-782 the composition is skewed to low complexity; the sequence is AQAQQGRAPS. 2 disordered regions span residues 773 to 813 and 932 to 985; these read AQAQ…GAGP and QAQA…GQGT. 3 stretches are compositionally biased toward polar residues: residues 793 to 803, 932 to 954, and 962 to 973; these read GVSSPFAQSRT, QAQA…NIQG, and PSLQNAQSQPRS.

The protein belongs to the EAF1 family. Component of the NuA4 histone acetyltransferase complex.

It is found in the nucleus. Functionally, component of the NuA4 histone acetyltransferase complex which is involved in transcriptional activation of selected genes principally by acetylation of nucleosomal histone H4 and H2A. The NuA4 complex is also involved in DNA repair. The sequence is that of Chromatin modification-related protein EAF1 (EAF1) from Cryptococcus neoformans var. neoformans serotype D (strain B-3501A) (Filobasidiella neoformans).